The primary structure comprises 472 residues: MAGGEAGVTLGQPHLSRQDLATLDVTKLTPLSHEVISRQATINIGTIGHVAHGKSTVVKAISGVHTVRFKNELERNITIKLGYANAKIYKLDDPSCPRPECYRSCGSSTPDEFPTDIPGTKGNFKLVRHVSFVDCPGHDILMATMLNGAAVMDAALLLIAGNESCPQPQTSEHLAAIEIMKLKHILILQNKIDLVKESQAKEQYDQILAFVQGTVAEGAPIIPISAQLKYNIEVVCEYIVKKIPVPPRDFTSEPRLIVIRSFDVNKPGCEVDDLKGGVAGGSILKGVLKVGQEIEVRPGIVSKDSEGKLMCKPIFSKIVSLFAEHNDLQYAAPGGLIGVGTKIDPTLCRADRMVGQVLGAVGALPEIFTELEISYFLLRRLLGVRTEGDKKAAKVQKLSKNEVLMVNIGSLSTGGRVSAVKADLGKIVLTNPVCTEVGEKIALSRRVEKHWRLIGWGQIRRGVTIKPTVDDD.

Residue A2 is modified to N-acetylalanine. S16 is modified (phosphoserine). The tr-type G domain maps to 39 to 248 (QATINIGTIG…IVKKIPVPPR (210 aa)). Residues 48 to 55 (GHVAHGKS) are G1. A GTP-binding site is contributed by 51-56 (AHGKST). The segment at 76 to 80 (NITIK) is G2. Residues 134–137 (DCPG) form a G3 region. Residues 190–193 (NKID) and 225–227 (SAQ) each bind GTP. Positions 190–193 (NKID) are G4. Residues 225 to 227 (SAQ) are G5. Residues 457–469 (GQIRRGVTIKPTV) form an interacts with CDC123 region.

The protein belongs to the TRAFAC class translation factor GTPase superfamily. Classic translation factor GTPase family. EIF2G subfamily. In terms of assembly, eukaryotic translation initiation factor 2 eIF2 is a heterotrimeric complex composed of an alpha (EIF2S1), a beta (EIF2S2) and a gamma (EIF2S3) chain. eIF2 is member of the 43S pre-initiation complex (43S PIC). Interacts (via C-terminus) with CDC123; the interaction is direct.

The protein resides in the cytoplasm. The protein localises to the cytosol. The enzyme catalyses GTP + H2O = GDP + phosphate + H(+). Functionally, member of the eIF2 complex that functions in the early steps of protein synthesis by forming a ternary complex with GTP and initiator tRNA. This complex binds to a 40S ribosomal subunit, followed by mRNA binding to form the 43S pre-initiation complex (43S PIC). Junction of the 60S ribosomal subunit to form the 80S initiation complex is preceded by hydrolysis of the GTP bound to eIF2 and release of an eIF2-GDP binary complex. In order for eIF2 to recycle and catalyze another round of initiation, the GDP bound to eIF2 must exchange with GTP by way of a reaction catalyzed by eIF-2B. In Sus scrofa (Pig), this protein is Eukaryotic translation initiation factor 2 subunit 3 (EIF2S3).